The chain runs to 166 residues: Sec-independent protein translocase protein TatB (166 aa).

The chain crosses the membrane as a helical span at residues 2 to 22; sequence FDGIGFMELLLIGVLGLVVLG. The interval 69–166 is disordered; it reads SKGLSNLSPE…DTRSNPKANG (98 aa). Polar residues-rich tracts occupy residues 88–97 and 112–132; these read QAAQSVNRPY and QIYSPVASTVQTSPAQASQAN. The segment covering 133-153 has biased composition (low complexity); that stretch reads PTATVEASPAPASPATPSEPS. The segment covering 155–166 has biased composition (polar residues); sequence GADTRSNPKANG.

It belongs to the TatB family. As to quaternary structure, the Tat system comprises two distinct complexes: a TatABC complex, containing multiple copies of TatA, TatB and TatC subunits, and a separate TatA complex, containing only TatA subunits. Substrates initially bind to the TatABC complex, which probably triggers association of the separate TatA complex to form the active translocon.

Its subcellular location is the cell inner membrane. Functionally, part of the twin-arginine translocation (Tat) system that transports large folded proteins containing a characteristic twin-arginine motif in their signal peptide across membranes. Together with TatC, TatB is part of a receptor directly interacting with Tat signal peptides. TatB may form an oligomeric binding site that transiently accommodates folded Tat precursor proteins before their translocation. This Shewanella baltica (strain OS155 / ATCC BAA-1091) protein is Sec-independent protein translocase protein TatB.